The following is a 185-amino-acid chain: Bcl-2-modifying factor (185 aa).

The disordered stretch occupies residues 1–28 (MEPPQCVEELEDDVFQPEDGEPGTQPGS). The span at 8-21 (EELEDDVFQPEDGE) shows a compositional bias: acidic residues. An interaction with DLC2 region spans residues 67 to 75 (DKATQTLSP). Residues 134–148 (IARKLQCIADQFHRL) carry the BH3 motif.

Belongs to the Bcl-2 family. As to quaternary structure, interacts with MCL1, BCL2, BCL2L1/BCL-Xl, BCL2A1 and BCL2L2/BCL-w. Interacts with the myosin V actin motor complex through its binding to DLC2.

Functionally, may play a role in apoptosis. This chain is Bcl-2-modifying factor (Bmf), found in Rattus norvegicus (Rat).